The primary structure comprises 305 residues: Probable branched-chain-amino-acid aminotransferase (305 aa).

Lysine 156 bears the N6-(pyridoxal phosphate)lysine mark.

The protein belongs to the class-IV pyridoxal-phosphate-dependent aminotransferase family. Pyridoxal 5'-phosphate is required as a cofactor.

It catalyses the reaction L-leucine + 2-oxoglutarate = 4-methyl-2-oxopentanoate + L-glutamate. It carries out the reaction L-isoleucine + 2-oxoglutarate = (S)-3-methyl-2-oxopentanoate + L-glutamate. The catalysed reaction is L-valine + 2-oxoglutarate = 3-methyl-2-oxobutanoate + L-glutamate. The protein operates within amino-acid biosynthesis; L-isoleucine biosynthesis; L-isoleucine from 2-oxobutanoate: step 4/4. Its pathway is amino-acid biosynthesis; L-leucine biosynthesis; L-leucine from 3-methyl-2-oxobutanoate: step 4/4. It functions in the pathway amino-acid biosynthesis; L-valine biosynthesis; L-valine from pyruvate: step 4/4. Its function is as follows. Acts on leucine, isoleucine and valine. This chain is Probable branched-chain-amino-acid aminotransferase (ilvE), found in Synechocystis sp. (strain ATCC 27184 / PCC 6803 / Kazusa).